Reading from the N-terminus, the 688-residue chain is NADH-ubiquinone oxidoreductase 75 kDa subunit (688 aa).

The region spanning 1 to 85 (MIIRFKINEI…DESIETEIDE (85 aa)) is the 2Fe-2S ferredoxin-type domain. Residues Cys38, Cys49, Cys52, and Cys66 each coordinate [2Fe-2S] cluster. Residues 85–124 (EILKAREGVMEFLLINHPLDCPICDQGGECDLQEQTLAYG) enclose the 4Fe-4S His(Cys)3-ligated-type domain. [4Fe-4S] cluster contacts are provided by His101, Cys105, Cys108, Cys114, Cys153, Cys156, Cys159, and Cys204. Positions 223–279 (LKNIKGIDIFDTLLTPINYQVKGGEIFRILPRINDRINEEWITDKVRFHYESYKIIE) constitute a 4Fe-4S Mo/W bis-MGD-type domain.

This sequence belongs to the complex I 75 kDa subunit family. As to quaternary structure, complex I is composed of about 45 different subunits. Requires [2Fe-2S] cluster as cofactor. It depends on [4Fe-4S] cluster as a cofactor.

It localises to the mitochondrion inner membrane. It carries out the reaction a ubiquinone + NADH + 5 H(+)(in) = a ubiquinol + NAD(+) + 4 H(+)(out). Its function is as follows. Core subunit of the mitochondrial membrane respiratory chain NADH dehydrogenase (Complex I) that is believed to belong to the minimal assembly required for catalysis. Complex I functions in the transfer of electrons from NADH to the respiratory chain. The immediate electron acceptor for the enzyme is believed to be ubiquinone. This is the largest subunit of complex I and it is a component of the iron-sulfur (IP) fragment of the enzyme. It may form part of the active site crevice where NADH is oxidized. The polypeptide is NADH-ubiquinone oxidoreductase 75 kDa subunit (nad11) (Dictyostelium discoideum (Social amoeba)).